The chain runs to 387 residues: Phosphoglycerate kinase (387 aa).

Residues 21–23, Arg36, 59–62, Arg113, and Arg146 each bind substrate; these read DLN and HLGR. ATP is bound by residues Lys197, Glu314, and 340 to 343; that span reads GGDT.

This sequence belongs to the phosphoglycerate kinase family. Monomer.

It is found in the cytoplasm. The enzyme catalyses (2R)-3-phosphoglycerate + ATP = (2R)-3-phospho-glyceroyl phosphate + ADP. Its pathway is carbohydrate degradation; glycolysis; pyruvate from D-glyceraldehyde 3-phosphate: step 2/5. This chain is Phosphoglycerate kinase, found in Aliivibrio salmonicida (strain LFI1238) (Vibrio salmonicida (strain LFI1238)).